The sequence spans 307 residues: Acetaldehyde dehydrogenase 2 (307 aa).

The active-site Acyl-thioester intermediate is the C131. NAD(+) is bound by residues 162–170 (SVGPGTRKN) and N273.

It belongs to the acetaldehyde dehydrogenase family.

The catalysed reaction is acetaldehyde + NAD(+) + CoA = acetyl-CoA + NADH + H(+). The polypeptide is Acetaldehyde dehydrogenase 2 (aphF) (Comamonas testosteroni (Pseudomonas testosteroni)).